Consider the following 277-residue polypeptide: Large ribosomal subunit protein uL2 (277 aa).

The interval Thr219 to Lys277 is disordered.

It belongs to the universal ribosomal protein uL2 family. In terms of assembly, part of the 50S ribosomal subunit. Forms a bridge to the 30S subunit in the 70S ribosome.

In terms of biological role, one of the primary rRNA binding proteins. Required for association of the 30S and 50S subunits to form the 70S ribosome, for tRNA binding and peptide bond formation. It has been suggested to have peptidyltransferase activity; this is somewhat controversial. Makes several contacts with the 16S rRNA in the 70S ribosome. In Clostridium botulinum (strain ATCC 19397 / Type A), this protein is Large ribosomal subunit protein uL2.